Consider the following 564-residue polypeptide: Mercuric reductase (564 aa).

The HMA domain maps to 1–65 (MSTLKITGMT…AVAGLGYRAT (65 aa)). A metal cation-binding residues include Cys-11 and Cys-14. FAD is bound by residues Ala-109, Gly-129, and Thr-134. The cysteines at positions 135 and 140 are disulfide-linked. Residues Lys-144, Ala-210, Asp-406, and Val-414 each coordinate FAD. Hg(2+) contacts are provided by Cys-561 and Cys-562.

The protein belongs to the class-I pyridine nucleotide-disulfide oxidoreductase family. Homodimer. FAD is required as a cofactor.

It carries out the reaction Hg + NADP(+) + H(+) = Hg(2+) + NADPH. In terms of biological role, resistance to Hg(2+) in bacteria appears to be governed by a specialized system which includes mercuric reductase. MerA protein is responsible for volatilizing mercury as Hg(0). The polypeptide is Mercuric reductase (merA) (Shigella flexneri).